A 122-amino-acid polypeptide reads, in one-letter code: Histone H2B type 2-K1 (122 aa).

The interval 1 to 30 (MSAEYGQRQQPGGRGGRSSGNKKSKKRCRR) is disordered. Over residues 20–30 (GNKKSKKRCRR) the composition is skewed to basic residues. Residue K31 is modified to N6-(2-hydroxyisobutyryl)lysine; alternate. K31 is subject to N6-(beta-hydroxybutyryl)lysine; alternate. At K31 the chain carries N6-crotonyllysine; alternate. N6-glutaryllysine; alternate is present on K31. K31 carries the post-translational modification N6-succinyllysine; alternate. Residue K31 forms a Glycyl lysine isopeptide (Lys-Gly) (interchain with G-Cter in ubiquitin); alternate linkage. Position 33 is a phosphoserine (S33). An N6-(2-hydroxyisobutyryl)lysine; alternate mark is found at K40, K43, and K54. Residues K40 and K43 each carry the N6-glutaryllysine; alternate modification. K40 is subject to N6-lactoyllysine; alternate. K43 carries the post-translational modification N6-methyllysine. K43 bears the N6-methyllysine; alternate mark. K54 carries the post-translational modification N6,N6-dimethyllysine. K54 carries the post-translational modification N6,N6-dimethyllysine; alternate. At R76 the chain carries Dimethylated arginine. At S81 the chain carries Phosphoserine. 2 positions are modified to omega-N-methylarginine: R83 and R89. Position 105 is an N6-(2-hydroxyisobutyryl)lysine; alternate (K105). The residue at position 105 (K105) is an N6-glutaryllysine; alternate. K105 bears the N6-lactoyllysine; alternate mark. N6-methyllysine is present on K105. K105 bears the N6-methyllysine; alternate mark. S109 carries O-linked (GlcNAc) serine glycosylation. At T112 the chain carries Phosphothreonine. An N6-(2-hydroxyisobutyryl)lysine; alternate mark is found at K113 and K117. An N6-(beta-hydroxybutyryl)lysine; alternate mark is found at K113 and K117. N6-glutaryllysine; alternate is present on residues K113 and K117. N6-succinyllysine; alternate occurs at positions 113 and 117. Residue K113 is modified to N6-lactoyllysine; alternate. K113 is subject to N6-malonyllysine; alternate. K113 is subject to N6-methylated lysine; alternate. K117 participates in a covalent cross-link: Glycyl lysine isopeptide (Lys-Gly) (interchain with G-Cter in ubiquitin); alternate.

This sequence belongs to the histone H2B family. In terms of assembly, the nucleosome is a histone octamer containing two molecules each of H2A, H2B, H3 and H4 assembled in one H3-H4 heterotetramer and two H2A-H2B heterodimers. The octamer wraps approximately 147 bp of DNA.

It is found in the chromosome. The protein resides in the nucleus. Its function is as follows. Core component of nucleosome. Nucleosomes wrap and compact DNA into chromatin, limiting DNA accessibility to the cellular machineries which require DNA as a template. Histones thereby play a central role in transcription regulation, DNA repair, DNA replication and chromosomal stability. DNA accessibility is regulated via a complex set of post-translational modifications of histones, also called histone code, and nucleosome remodeling. This is Histone H2B type 2-K1 from Homo sapiens (Human).